The chain runs to 535 residues: Methylmalonate-semialdehyde/malonate-semialdehyde dehydrogenase [acylating], mitochondrial (535 aa).

The transit peptide at 1-33 (MAALLAAAAVRARILQVSSKVKSSPTWYSASSF) directs the protein to the mitochondrion. N6-acetyllysine; alternate is present on residues Lys-47, Lys-52, Lys-55, and Lys-76. 4 positions are modified to N6-succinyllysine; alternate: Lys-47, Lys-52, Lys-55, and Lys-76. An N6-acetyllysine modification is found at Lys-87. N6-acetyllysine; alternate is present on residues Lys-117 and Lys-129. N6-succinyllysine; alternate occurs at positions 117 and 129. NAD(+) contacts are provided by Ala-183, Phe-185, Lys-209, Glu-212, Arg-213, and Ser-262. The residue at position 262 (Ser-262) is a Phosphoserine. An N6-acetyllysine modification is found at Lys-298. Residue Cys-317 is the Nucleophile of the active site. 2 positions are modified to N6-acetyllysine: Lys-330 and Lys-331. 2 positions are modified to N6-acetyllysine; alternate: Lys-364 and Lys-376. Lys-364 and Lys-376 each carry N6-succinyllysine; alternate. Ser-380 bears the Phosphoserine mark. N6-succinyllysine is present on Lys-391. Glu-417 provides a ligand contact to NAD(+). Position 500 is an N6-acetyllysine (Lys-500). Lys-517 carries the post-translational modification N6-succinyllysine.

The protein belongs to the aldehyde dehydrogenase family. As to quaternary structure, homotetramer.

The protein resides in the mitochondrion. The catalysed reaction is 3-oxopropanoate + NAD(+) + CoA + H2O = hydrogencarbonate + acetyl-CoA + NADH + H(+). It carries out the reaction 2-methyl-3-oxopropanoate + NAD(+) + CoA + H2O = propanoyl-CoA + hydrogencarbonate + NADH + H(+). The enzyme catalyses (R)-2-methyl-3-oxopropanoate + NAD(+) + CoA + H2O = propanoyl-CoA + hydrogencarbonate + NADH + H(+). It catalyses the reaction (S)-2-methyl-3-oxopropanoate + NAD(+) + CoA + H2O = propanoyl-CoA + hydrogencarbonate + NADH + H(+). Its function is as follows. Malonate and methylmalonate semialdehyde dehydrogenase involved in the catabolism of valine, thymine, and compounds catabolized by way of beta-alanine, including uracil and cytidine. The protein is Methylmalonate-semialdehyde/malonate-semialdehyde dehydrogenase [acylating], mitochondrial of Homo sapiens (Human).